Here is a 439-residue protein sequence, read N- to C-terminus: Large ribosomal subunit protein mL44 (439 aa).

Disordered regions lie at residues 39–73 (QSTA…SLPS) and 247–282 (KAME…YGNP). The segment covering 247–257 (KAMEEQDQDKT) has biased composition (basic and acidic residues). Positions 258 to 274 (PDEEEAEMVANEQDQDV) are enriched in acidic residues.

It belongs to the ribonuclease III family. Mitochondrion-specific ribosomal protein mL44 subfamily. Component of the mitochondrial large ribosomal subunit (mt-LSU). Mature N.crassa 74S mitochondrial ribosomes consist of a small (37S) and a large (54S) subunit. The 37S small subunit contains a 16S ribosomal RNA (16S mt-rRNA) and 32 different proteins. The 54S large subunit contains a 23S rRNA (23S mt-rRNA) and 42 different proteins. mL44 forms a heterodimer with mL57 and stabilizes rRNA expansion segments 1/2 at a membrane-facing protuberance close to the point of attachment of the ribosome to the translocon in the membrane.

It localises to the mitochondrion. In terms of biological role, component of the mitochondrial ribosome (mitoribosome), a dedicated translation machinery responsible for the synthesis of mitochondrial genome-encoded proteins, including at least some of the essential transmembrane subunits of the mitochondrial respiratory chain. The mitoribosomes are attached to the mitochondrial inner membrane and translation products are cotranslationally integrated into the membrane. This Neurospora crassa (strain ATCC 24698 / 74-OR23-1A / CBS 708.71 / DSM 1257 / FGSC 987) protein is Large ribosomal subunit protein mL44 (mrpl3).